Consider the following 67-residue polypeptide: UPF0434 protein Bphy_0537 (67 aa).

The protein belongs to the UPF0434 family.

This Paraburkholderia phymatum (strain DSM 17167 / CIP 108236 / LMG 21445 / STM815) (Burkholderia phymatum) protein is UPF0434 protein Bphy_0537.